The chain runs to 159 residues: uncharacterized protein (159 aa).

This sequence belongs to the mimivirus L15/L51/R83 family.

This is an uncharacterized protein from Acanthamoeba polyphaga mimivirus (APMV).